Here is an 884-residue protein sequence, read N- to C-terminus: MGSTGEPDRKRRLSSSVAPGGGAPVSPAKRLAVAPTSEDKKLDFTVLKYKNQKLSEQLEAHKFEYRALENKFAGLKEKQRTHNETLSLVNSSWEQLVADLKSRSFCKSGSPNSSPGSGHNNVQKDGTCAPIERDTLRSLVESGATESSGCLPGCHLGSDAPPLHLSTANALGDIFFPSSDLLQANEECALAALTKLPENDRSKQLQSTSSNLLSSLNNVVQALSNLQLKHKQLAEDYQNQRDSSARKRAEHRRLKEELASAASELEETNYKLAALKAQRDNTQGARIPYPTLGNKNMPEDKVRDKQREMQDLEATHKELSELISKRLVEIKRLHEERIEILNKIATFQNILMDFKSIRSSKAFQLVNDRLQKSQAELDHYQTLLEKLQVDKDKFVWQERQFNLKVDLAEIPERVSTYCESSIADLKKDIQKLCDEKNMLILKLEEASREPGRNQVITKFKALVSSIPREMGAMQSEMTKHKEASLELNSLRAEVHSLSRILSRKERDNEEASCRSARAGSDITQLQSVISDLKQTNKELKLFADMYKRESTDSREIMESRDREFLEWAHVHALKSSLDESKLEQRVKAANEAEAITQQRLATAEAEIAESGQKLGTSRKDLVSLSHMLKSKQEECEAYRVEVECIGQAYEDIQAQNQQLLQQIIERDDDNTKIFMEGVKAKQTQDALHLETYSLRRNLQQESSLMDLYNQKIVSLEDQLKMWSDRVGKLQEDGWQQSVSLSNYQRKLVDVHRDAQKLMQSLDGIQANVGSSRLEVADLLIELEKERFSKKRIEDDLEVMSRKASSLRAKARESAVLEKLRHEVKEYRGILKCGICHDRQKEVVITKCYHLFCNQCIQKSLGNRQRRCPSCSLSFGANDVKPIYI.

A disordered region spans residues 1 to 37 (MGSTGEPDRKRRLSSSVAPGGGAPVSPAKRLAVAPTS). Positions 49–86 (YKNQKLSEQLEAHKFEYRALENKFAGLKEKQRTHNETL) form a coiled coil. The segment at 107-127 (KSGSPNSSPGSGHNNVQKDGT) is disordered. A compositionally biased stretch (low complexity) spans 108–121 (SGSPNSSPGSGHNN). Coiled coils occupy residues 216 to 541 (LNNV…ELKL), 580 to 663 (SKLE…LQQI), 696 to 762 (RNLQ…QSLD), and 789 to 827 (KKRIEDDLEVMSRKASSLRAKARESAVLEKLRHEVKEYR). The RING-type zinc-finger motif lies at 832–871 (CGICHDRQKEVVITKCYHLFCNQCIQKSLGNRQRRCPSCS).

This sequence belongs to the BRE1 family. In terms of assembly, interacts with SKIPA. Interacts with HUB2.

The protein localises to the nucleus. The catalysed reaction is S-ubiquitinyl-[E2 ubiquitin-conjugating enzyme]-L-cysteine + [acceptor protein]-L-lysine = [E2 ubiquitin-conjugating enzyme]-L-cysteine + N(6)-ubiquitinyl-[acceptor protein]-L-lysine.. It participates in protein modification; protein ubiquitination. Its function is as follows. E3 ubiquitin-protein ligase that monoubiquitinates H2B to form H2BK143ub1. H2BK143ub1 gives a specific tag for epigenetic transcriptional activation and is a prerequisite for H3 Lys-4 methylation (H3K4me). It thereby plays a central role in histone code and gene regulation. H2B monoubiquitination (H2BK143ub1), mediated by HUB1, modulates transcriptional regulation of anther development, likely by promoting histone H3K4 dimethylation (H3K4me2) in the chromatin of the key tapetum degradation-related genes C4, CP1 and UDT1. This Oryza sativa subsp. japonica (Rice) protein is E3 ubiquitin-protein ligase BRE1-like 1.